Here is a 200-residue protein sequence, read N- to C-terminus: Peptidyl-tRNA hydrolase (200 aa).

Tyrosine 17 serves as a coordination point for tRNA. The active-site Proton acceptor is histidine 22. 3 residues coordinate tRNA: tyrosine 78, asparagine 80, and asparagine 126.

Belongs to the PTH family. As to quaternary structure, monomer.

Its subcellular location is the cytoplasm. It carries out the reaction an N-acyl-L-alpha-aminoacyl-tRNA + H2O = an N-acyl-L-amino acid + a tRNA + H(+). Hydrolyzes ribosome-free peptidyl-tRNAs (with 1 or more amino acids incorporated), which drop off the ribosome during protein synthesis, or as a result of ribosome stalling. Its function is as follows. Catalyzes the release of premature peptidyl moieties from peptidyl-tRNA molecules trapped in stalled 50S ribosomal subunits, and thus maintains levels of free tRNAs and 50S ribosomes. The polypeptide is Peptidyl-tRNA hydrolase (Cutibacterium acnes (strain DSM 16379 / KPA171202) (Propionibacterium acnes)).